The primary structure comprises 399 residues: Probable inactive 2-oxoglutarate-dependent dioxygenase AOP2 (399 aa).

A Fe2OG dioxygenase domain is found at 248-345 (GGDDVEANDD…RYTAAIFTCP (98 aa)). Positions 268, 270, and 325 each coordinate Fe cation. Position 336 (arginine 336) interacts with 2-oxoglutarate.

This sequence belongs to the iron/ascorbate-dependent oxidoreductase family. Requires Fe(2+) as cofactor.

This Arabidopsis thaliana (Mouse-ear cress) protein is Probable inactive 2-oxoglutarate-dependent dioxygenase AOP2 (AOP2).